The chain runs to 501 residues: Cytochrome P450 71B3 (501 aa).

Residues 2-22 form a helical membrane-spanning segment; that stretch reads SILLYFFFLPVILSLIFMKKF. Residue Cys-445 participates in heme binding.

This sequence belongs to the cytochrome P450 family. Requires heme as cofactor.

It is found in the membrane. The polypeptide is Cytochrome P450 71B3 (CYP71B3) (Arabidopsis thaliana (Mouse-ear cress)).